A 196-amino-acid chain; its full sequence is Proteasome subunit beta 1 (196 aa).

Residues 1–6 (MEELPA) constitute a propeptide, removed in mature form; by autocatalysis. Threonine 7 functions as the Nucleophile in the catalytic mechanism.

Belongs to the peptidase T1B family. The 20S proteasome core is composed of 14 alpha and 14 beta subunits that assemble into four stacked heptameric rings, resulting in a barrel-shaped structure. The two inner rings, each composed of seven catalytic beta subunits, are sandwiched by two outer rings, each composed of seven alpha subunits. The catalytic chamber with the active sites is on the inside of the barrel. Has a gated structure, the ends of the cylinder being occluded by the N-termini of the alpha-subunits. Is capped at one or both ends by the proteasome regulatory ATPase, PAN.

The protein localises to the cytoplasm. The enzyme catalyses Cleavage of peptide bonds with very broad specificity.. Its activity is regulated as follows. The formation of the proteasomal ATPase PAN-20S proteasome complex, via the docking of the C-termini of PAN into the intersubunit pockets in the alpha-rings, triggers opening of the gate for substrate entry. Interconversion between the open-gate and close-gate conformations leads to a dynamic regulation of the 20S proteasome proteolysis activity. Functionally, component of the proteasome core, a large protease complex with broad specificity involved in protein degradation. The protein is Proteasome subunit beta 1 of Saccharolobus solfataricus (strain ATCC 35092 / DSM 1617 / JCM 11322 / P2) (Sulfolobus solfataricus).